Consider the following 532-residue polypeptide: Spore germination protein 270-11 (532 aa).

Disordered stretches follow at residues 113–225 and 328–436; these read TTTS…GYGS and LSPT…TTGT. Over residues 329-426 the composition is skewed to low complexity; sequence SPTCSDSSSP…GSGSSSETQP (98 aa). 13 repeat units span residues 339 to 342, 343 to 346, 347 to 350, 351 to 354, 355 to 358, 359 to 362, 363 to 366, 367 to 370, 371 to 374, 375 to 378, 397 to 400, 401 to 404, and 405 to 408. The segment at 339-378 is 10 X 4 AA tandem repeats of T-[EP]-T-[EP]; that stretch reads TPTPTETPTETPTETPTETPTETPTETPTETPTETETPTP. The tract at residues 397 to 408 is 3 X 4 AA tandem repeats of T-[EP]-T-[PD]; that stretch reads TPTPTETDTPTP.

This is Spore germination protein 270-11 (celB) from Dictyostelium discoideum (Social amoeba).